Reading from the N-terminus, the 115-residue chain is U3-lycotoxin-Ls1a (115 aa).

The first 20 residues, 1 to 20, serve as a signal peptide directing secretion; it reads MKFVLLFGVLLLTLFSYSSA. The propeptide occupies 21 to 44; it reads EMLDDFDQADEDELLSLIEKEEAR. 4 cysteine pairs are disulfide-bonded: cysteine 48–cysteine 63, cysteine 55–cysteine 72, cysteine 62–cysteine 87, and cysteine 74–cysteine 85.

Belongs to the neurotoxin 19 (CSTX) family. 01 subfamily. As to expression, expressed by the venom gland.

Its subcellular location is the secreted. In Lycosa singoriensis (Wolf spider), this protein is U3-lycotoxin-Ls1a.